The chain runs to 180 residues: Outer membrane protein YfaZ (180 aa).

The signal sequence occupies residues 1-21 (MKKIALAGLAGMLLVSASVNA).

The protein resides in the cell outer membrane. The polypeptide is Outer membrane protein YfaZ (yfaZ) (Escherichia coli (strain K12)).